The following is an 89-amino-acid chain: Small ribosomal subunit protein uS15 (89 aa).

Belongs to the universal ribosomal protein uS15 family. As to quaternary structure, part of the 30S ribosomal subunit. Forms a bridge to the 50S subunit in the 70S ribosome, contacting the 23S rRNA.

Functionally, one of the primary rRNA binding proteins, it binds directly to 16S rRNA where it helps nucleate assembly of the platform of the 30S subunit by binding and bridging several RNA helices of the 16S rRNA. In terms of biological role, forms an intersubunit bridge (bridge B4) with the 23S rRNA of the 50S subunit in the ribosome. This is Small ribosomal subunit protein uS15 from Limosilactobacillus reuteri (strain DSM 20016) (Lactobacillus reuteri).